The chain runs to 122 residues: Large ribosomal subunit protein uL14c (122 aa).

This sequence belongs to the universal ribosomal protein uL14 family. In terms of assembly, part of the 50S ribosomal subunit.

It localises to the plastid. It is found in the chloroplast. Its function is as follows. Binds to 23S rRNA. The polypeptide is Large ribosomal subunit protein uL14c (Chara vulgaris (Common stonewort)).